Consider the following 220-residue polypeptide: N-(5'-phosphoribosyl)anthranilate isomerase (220 aa).

Belongs to the TrpF family.

It catalyses the reaction N-(5-phospho-beta-D-ribosyl)anthranilate = 1-(2-carboxyphenylamino)-1-deoxy-D-ribulose 5-phosphate. It functions in the pathway amino-acid biosynthesis; L-tryptophan biosynthesis; L-tryptophan from chorismate: step 3/5. This Gloeothece citriformis (strain PCC 7424) (Cyanothece sp. (strain PCC 7424)) protein is N-(5'-phosphoribosyl)anthranilate isomerase.